The chain runs to 200 residues: Mpv17-like protein 2 (200 aa).

Helical transmembrane passes span 24–40 (ALLL…MAAG), 63–83 (ASMF…YLWL), and 102–122 (VLVD…LGLG).

Belongs to the peroxisomal membrane protein PXMP2/4 family. In terms of assembly, interacts with the large mitochondrial ribosomal subunit.

It localises to the membrane. The protein resides in the mitochondrion inner membrane. Required for the assembly and stability of the mitochondrial ribosome. Is a positive regulator of mitochondrial protein synthesis. In Mus musculus (Mouse), this protein is Mpv17-like protein 2 (Mpv17l2).